The primary structure comprises 175 residues: Alpha-crystallin B chain (175 aa).

Position 1 is an N-acetylmethionine (methionine 1). Serine 19 carries the post-translational modification Phosphoserine. An O-linked (GlcNAc) serine glycan is attached at serine 41. Serine 45 and serine 59 each carry phosphoserine. One can recognise a sHSP domain in the interval 56 to 164 (RAPSWIDTGL…PERTIPITRE (109 aa)). Histidine 83 contacts Zn(2+). N-linked (Glc) (glycation) lysine glycosylation is present at lysine 90. Residue lysine 92 is modified to N6-acetyllysine; alternate. Residue lysine 92 is glycosylated (N-linked (Glc) (glycation) lysine; alternate). Zn(2+) contacts are provided by histidine 104, glutamate 106, histidine 111, and histidine 119. Residues 144–175 (TVNGPRKQASGPERTIPITREEKPAVTAAPKK) are disordered. An N6-acetyllysine modification is found at lysine 166. O-linked (GlcNAc) threonine glycosylation is present at threonine 170.

This sequence belongs to the small heat shock protein (HSP20) family. In terms of assembly, heteromer composed of three CRYAA and one CRYAB subunits. Aggregates with homologous proteins, including the small heat shock protein HSPB1, to form large heteromeric complexes. Inter-subunit bridging via zinc ions enhances stability, which is crucial as there is no protein turn over in the lens. Interacts with HSPBAP1 and TTN/titin. Interacts with TMEM109; in the cellular response to DNA damage. Interacts with DES; binds rapidly during early stages of DES filament assembly and a reduced binding seen in the later stages. Interacts with TMED10; the interaction mediates the translocation from the cytoplasm into the ERGIC (endoplasmic reticulum-Golgi intermediate compartment) and thereby secretion. Interacts with ATP6V1A and with MTOR, forming a ternary complex. Post-translationally, it is not known whether either Lys-90, or Lys-92, or both are glycated. In terms of tissue distribution, lens as well as other tissues.

Its subcellular location is the cytoplasm. It localises to the nucleus. The protein resides in the secreted. The protein localises to the lysosome. Functionally, may contribute to the transparency and refractive index of the lens. Has chaperone-like activity, preventing aggregation of various proteins under a wide range of stress conditions. In lens epithelial cells, stabilizes the ATP6V1A protein, preventing its degradation by the proteasome. This chain is Alpha-crystallin B chain (CRYAB), found in Bos taurus (Bovine).